Reading from the N-terminus, the 720-residue chain is Engulfment and cell motility protein 2 (720 aa).

Tyr48 bears the Phosphotyrosine mark. The 175-residue stretch at 311–485 folds into the ELMO domain; sequence AQRDIIFELR…VVREQITRAL (175 aa). Ser503 is subject to Phosphoserine. A PH domain is found at 553 to 674; sequence SSFRKIGNRR…LLGKDMSSEL (122 aa). The short motif at 700-707 is the SH3-binding element; the sequence is PEAPPPIP. Tyr717 bears the Phosphotyrosine mark.

As to quaternary structure, interacts with the SH3-domain of DOCK1 via its SH3-binding site. Probably part of a complex with DOCK1 and RAC1. Probably part of a complex with DOCK1 and CRK isoform CRK-II. Interacts with ARHGEF16, DOCK4 and EPHA2; mediates activation of RAC1 by EPHA2. Interacts with ADGRB3. Interacts with AUTS2; the interaction is direct. As to expression, widely expressed, with a higher expression in skeletal muscle, kidney and placenta.

It is found in the cytoplasm. The protein localises to the cytosol. The protein resides in the membrane. Functionally, involved in cytoskeletal rearrangements required for phagocytosis of apoptotic cells and cell motility. Acts in association with DOCK1 and CRK. Was initially proposed to be required in complex with DOCK1 to activate Rac Rho small GTPases. May enhance the guanine nucleotide exchange factor (GEF) activity of DOCK1. The chain is Engulfment and cell motility protein 2 (ELMO2) from Homo sapiens (Human).